A 404-amino-acid polypeptide reads, in one-letter code: DNA gyrase subunit B (404 aa).

A Toprim domain is found at 321–404 (SEIYIVEGDS…VIIMTDADVD (84 aa)). Residues Glu-327, Asp-400, and Asp-402 each coordinate Mg(2+).

Belongs to the type II topoisomerase GyrB family. Heterotetramer, composed of two GyrA and two GyrB chains. In the heterotetramer, GyrA contains the active site tyrosine that forms a transient covalent intermediate with DNA, while GyrB binds cofactors and catalyzes ATP hydrolysis. It depends on Mg(2+) as a cofactor. Mn(2+) is required as a cofactor. The cofactor is Ca(2+).

The protein localises to the cytoplasm. It carries out the reaction ATP-dependent breakage, passage and rejoining of double-stranded DNA.. Functionally, a type II topoisomerase that negatively supercoils closed circular double-stranded (ds) DNA in an ATP-dependent manner to modulate DNA topology and maintain chromosomes in an underwound state. Negative supercoiling favors strand separation, and DNA replication, transcription, recombination and repair, all of which involve strand separation. Also able to catalyze the interconversion of other topological isomers of dsDNA rings, including catenanes and knotted rings. Type II topoisomerases break and join 2 DNA strands simultaneously in an ATP-dependent manner. The protein is DNA gyrase subunit B (gyrB) of Bacillus cereus.